The following is a 576-amino-acid chain: Polyphenol oxidase 3 (576 aa).

Cu cation-binding residues include His-61, His-85, His-94, His-259, His-263, and His-296. A cross-link (2'-(S-cysteinyl)-histidine (Cys-His)) is located at residues 83–85 (CTH). His-263 provides a ligand contact to substrate. A propeptide spans 393-576 (FVTTQTENPA…ILDDIIHRVN (184 aa)) (removed in mature form).

The protein belongs to the tyrosinase family. Tetramer composed of two subunits of PPO3 (H subunits) and two subunits of the as yet uncharacterized product of ORF239342 (L subunits). It depends on Cu(2+) as a cofactor. The C-ter is probably cleaved after Gly-392 since the mature active protein is smaller than the protein encoded by the gene.

The catalysed reaction is 2 L-dopa + O2 = 2 L-dopaquinone + 2 H2O. It catalyses the reaction L-tyrosine + O2 = L-dopaquinone + H2O. Its function is as follows. Copper-containing oxidase that catalyzes both the o-hydroxylation of monophenols and the subsequent oxidation of the resulting o-diphenols into reactive o-quinones, which evolve spontaneously to produce intermediates, which associate in dark brown pigments. Involved in the initial step of melanin synthesis. Melanins constitute a mechanism of defense and resistance to stress such as UV radiations, free radicals, gamma rays, dehydratation and extreme temperatures, and contribute to the fungal cell-wall resistance against hydrolytic enzymes in avoiding cellular lysis. Fungal pigments are also involved in the formation and stability of spores. This chain is Polyphenol oxidase 3 (PPO3), found in Agaricus bisporus (White button mushroom).